Reading from the N-terminus, the 247-residue chain is ATP synthase subunit a, chloroplastic (247 aa).

5 helical membrane passes run 38–58, 95–115, 134–154, 199–219, and 220–240; these read QVLITSWVVITILLGSVVIAV, VPFIGTMFLFIFVSNWSGALL, INTTVALALLTSAAYFYAGLS, LVVVVLVSLVPLVVPIPVMFL, and GLFTSGIQALIFATLAAAYIG.

Belongs to the ATPase A chain family. In terms of assembly, F-type ATPases have 2 components, CF(1) - the catalytic core - and CF(0) - the membrane proton channel. CF(1) has five subunits: alpha(3), beta(3), gamma(1), delta(1), epsilon(1). CF(0) has four main subunits: a, b, b' and c.

The protein localises to the plastid. It is found in the chloroplast thylakoid membrane. Key component of the proton channel; it plays a direct role in the translocation of protons across the membrane. In Agrostis stolonifera (Creeping bentgrass), this protein is ATP synthase subunit a, chloroplastic.